The sequence spans 647 residues: DNA mismatch repair protein MutL (647 aa).

Residues 375–395 (KQEEPQAVKQPPQLWQPPKQE) are disordered. Residues 383 to 395 (KQPPQLWQPPKQE) are compositionally biased toward low complexity.

Belongs to the DNA mismatch repair MutL/HexB family.

This protein is involved in the repair of mismatches in DNA. It is required for dam-dependent methyl-directed DNA mismatch repair. May act as a 'molecular matchmaker', a protein that promotes the formation of a stable complex between two or more DNA-binding proteins in an ATP-dependent manner without itself being part of a final effector complex. The protein is DNA mismatch repair protein MutL of Bacillus cereus (strain B4264).